A 1774-amino-acid chain; its full sequence is MEPTAAGNLLEIMDLARTLRQEQLFIQQEQTAFGQLTGALETNAGTITKLAFVCAQQRQILNELLVARNDHDPLLSCRRASAYDSAQFMDAKQVLPYEHALAYEDLFNYLYNTPYLLALSLATADRLSLLSSGQLGQIINTIATGLYGNAINTKDVELLLKLLRELIEIQLLGSEQPRRLLRTNSSSFARLYQRLVESLFSARIFLTAALHAPLMGVLSEHDVWLDLDPHKLMQSFSQKERERRFGQAGEGEHGEEYQRNVARFHAETLGKLHTHAQVFVKSLQQSWALFPSSLRWLLQTLSQQLRQTHRHKEQEIRQLLTDLVFTHFISPAIVSADLVGIIDVNVSERMRHNLNQIVQLLQRLALNDEGSELVQLMELLMVGETGEDVVAILPQQTDFERSQLAINQRELSQFVEFFRLLTSRDEYDVSAEERQRLQRILGRIPKQQQQQQSQSELPDATANSPEKQQNNNNKKNNNRSLMRLGKAKKKLANSMSFSNSNSNSNKNLQPAVEQLPPLANGQANSSNISSASNGDLEQCSSHSGSNTSLSSCGAAPAAPTPAPTAVTNDHQYCARDEPVLMFSIYNASAKSKLKPLTEEEVLKMNCIGQDGSNLLPAVACTTGVVAPSSNNDDVSSLEAMRRPQDDASIGNSDNLEAISEAAHSVASSLDLEEQQERDVHENEDNLSDMVSANVSGRGTPNISGRDTPSSQVTDGDGGGGDMAHHHGHHVRAANPQMQKMLLSKARSDIDDKFCKFELKKFEVDENVSIISDTWSTDVLASDSENTLDATGSERGGDRGDRGDRDRDRNFSTPLIPSAVVLPGDNNFVVEALARAGAGVISGPHMDASDQRSESNWSTDVLASDSEKLAEIDTDDNASITAKSDIGPGSGGGAGVPEAGGGGGVVGDDDDEDEQTPGSSGDGEPDPDPDPDRERLRNGSERSQEDSAFFDAVNSYEDAHHLYHGASSLARSSVRTSYHVMGGESSFQQQYKSSGAEGIGRKTTPLMGTSCMRRQTSAESSISNQSLNLEEPPPPPRALAKHHHHHQHRDRDRDRDRDRDHREHHHKSAALKKKKHQEHKEHQHRDLIDFSDCSEDKDEEEQPPGLVQQLLDMFNQEEQQQQQQQQGCSSQSSVEHRRISMEQRSQCIDGRRNGILAGSMRRHQSLNYENHEIMLNSMLPKTDDDKQELLLCAQTQQQLQLEERAAAAENSCSNRAGAGAGAGARGTSKPPSKATGAIPKSISFDASADKEQQPYRDRERERDRERDRERDRDRERDRDRDRDRDRDREHHSAGIFNKLKQGFFKHRRGGSSSSKNNAIAIAAPSSINPNPSPSSATDPGGRSVSFDPSAGVCVSFGTHYCDSSEDILAKYRRKVSSSSEATNSDSTGNGAGGGAAAAAAAAAAHLHKHVNGGLLPGVAFGSVKQKLRTVLSKTDLHSGDFRQTTPMRPLDATTPLQIYLQIQLAQCISLQRLPQISHVAEALRCLEQLERPQHGQLLVELQHDLQRRQSYLQYLMRHRQQLLLRSEQLEQLEVRLRSEARSCQRCLMQSLVRLYLAWARQQDKLEQFQTEFGQLRASDERVELVEEFVEQLLQQLITSADLLDDWQVDAAREAIERMLLELMYQQVMFPNEDADVSRDTVLSAHIGKLQRFVHPAHPALCIAQEYLGEAPWTFAQQQLCHMAAYKTPREKLQCIINCISSIMSLLRMSCGRVPAADDLLPVLIYVVIMANPPYLLSTVEYISCFLGRKLDGENEFYWTLFGSVVKFIKTMDYLD.

Residues 157–396 form the Ras-GAP domain; that stretch reads ELLLKLLREL…EDVVAILPQQ (240 aa). Disordered regions lie at residues 444–480, 517–564, 661–727, 784–811, 869–947, 983–1102, 1115–1142, and 1214–1342; these read IPKQQQQQQSQSELPDATANSPEKQQNNNNKKNNNRS, PLAN…PAPT, AAHS…HHHG, ENTLDATGSERGGDRGDRGDRDRDRNFS, AEID…EDSA, ESSF…EEQP, QEEQQQQQQQQGCSSQSSVEHRRISMEQ, and RAGA…GGRS. Composition is skewed to low complexity over residues 519-533 and 540-557; these read ANGQANSSNISSASN and SSHSGSNTSLSSCGAAPA. The span at 674–683 shows a compositional bias: basic and acidic residues; the sequence is QQERDVHENE. A compositionally biased stretch (polar residues) spans 688 to 713; the sequence is DMVSANVSGRGTPNISGRDTPSSQVT. The segment covering 794–809 has biased composition (basic and acidic residues); it reads RGGDRGDRGDRDRDRN. The span at 887–905 shows a compositional bias: gly residues; the sequence is PGSGGGAGVPEAGGGGGVV. Positions 929–944 are enriched in basic and acidic residues; sequence DPDRERLRNGSERSQE. Polar residues predominate over residues 1011–1027; sequence MRRQTSAESSISNQSLN. Residues 1038 to 1047 are compositionally biased toward basic residues; that stretch reads LAKHHHHHQH. The segment covering 1048–1060 has biased composition (basic and acidic residues); the sequence is RDRDRDRDRDRDH. Residues 1061–1076 are compositionally biased toward basic residues; that stretch reads REHHHKSAALKKKKHQ. Residues 1077–1087 show a composition bias toward basic and acidic residues; it reads EHKEHQHRDLI. Residues 1091-1101 are compositionally biased toward acidic residues; the sequence is DCSEDKDEEEQ. The segment covering 1115 to 1125 has biased composition (low complexity); the sequence is QEEQQQQQQQQ. Residues 1246-1291 are compositionally biased toward basic and acidic residues; sequence SADKEQQPYRDRERERDRERDRERDRDRERDRDRDRDRDRDREHHS. The span at 1310-1335 shows a compositional bias: low complexity; the sequence is SSSSKNNAIAIAAPSSINPNPSPSSA. Residues 1516 to 1546 are a coiled coil; it reads RHRQQLLLRSEQLEQLEVRLRSEARSCQRCL. Positions 1635–1774 constitute a VPS9 domain; that stretch reads VSRDTVLSAH…KFIKTMDYLD (140 aa).

It belongs to the GAPVD1 family.

It localises to the membrane. Acts both as a GTPase-activating protein (GAP) and a guanine nucleotide exchange factor (GEF), and participates in endocytosis. The polypeptide is Receptor-mediated endocytosis protein 6 homolog (Drosophila pseudoobscura pseudoobscura (Fruit fly)).